Here is a 189-residue protein sequence, read N- to C-terminus: Hypoxanthine/guanine phosphoribosyltransferase (189 aa).

This sequence belongs to the purine/pyrimidine phosphoribosyltransferase family. Archaeal HPRT subfamily. As to quaternary structure, homodimer.

Its subcellular location is the cytoplasm. It carries out the reaction IMP + diphosphate = hypoxanthine + 5-phospho-alpha-D-ribose 1-diphosphate. The catalysed reaction is GMP + diphosphate = guanine + 5-phospho-alpha-D-ribose 1-diphosphate. It functions in the pathway purine metabolism; IMP biosynthesis via salvage pathway; IMP from hypoxanthine: step 1/1. Functionally, catalyzes a salvage reaction resulting in the formation of IMP that is energically less costly than de novo synthesis. The protein is Hypoxanthine/guanine phosphoribosyltransferase of Methanothrix soehngenii (strain ATCC 5969 / DSM 3671 / JCM 10134 / NBRC 103675 / OCM 69 / GP-6) (Methanosaeta concilii).